The following is a 306-amino-acid chain: Nod factor export ATP-binding protein I (306 aa).

Residues 8–238 (IDLVGVRKSF…HIGCNVIEIY (231 aa)) form the ABC transporter domain. Residue 40–47 (GPNGAGKS) coordinates ATP.

It belongs to the ABC transporter superfamily. Lipooligosaccharide exporter (TC 3.A.1.102) family. As to quaternary structure, the complex is composed of two ATP-binding proteins (NodI) and two transmembrane proteins (NodJ).

It localises to the cell inner membrane. Part of the ABC transporter complex NodIJ involved in the export of the nodulation factors (Nod factors), the bacterial signal molecules that induce symbiosis and subsequent nodulation induction. Nod factors are LCO (lipo-chitin oligosaccharide), a modified beta-1,4-linked N-acetylglucosamine oligosaccharide. This subunit is responsible for energy coupling to the transport system. The sequence is that of Nod factor export ATP-binding protein I from Bradyrhizobium diazoefficiens (strain JCM 10833 / BCRC 13528 / IAM 13628 / NBRC 14792 / USDA 110).